Consider the following 67-residue polypeptide: UPF0434 protein Bcep1808_2639 (67 aa).

It belongs to the UPF0434 family.

In Burkholderia vietnamiensis (strain G4 / LMG 22486) (Burkholderia cepacia (strain R1808)), this protein is UPF0434 protein Bcep1808_2639.